Consider the following 343-residue polypeptide: Cytoplasmic tRNA 2-thiolation protein 1 (343 aa).

Belongs to the TtcA family. CTU1/NCS6/ATPBD3 subfamily.

It localises to the cytoplasm. The protein operates within tRNA modification; 5-methoxycarbonylmethyl-2-thiouridine-tRNA biosynthesis. Its function is as follows. Plays a central role in 2-thiolation of mcm(5)S(2)U at tRNA wobble positions of tRNA(Lys), tRNA(Glu) and tRNA(Gln). Directly binds tRNAs and probably acts by catalyzing adenylation of tRNAs, an intermediate required for 2-thiolation. It is unclear whether it acts as a sulfurtransferase that transfers sulfur from thiocarboxylated URM1 onto the uridine of tRNAs at wobble position. In Drosophila melanogaster (Fruit fly), this protein is Cytoplasmic tRNA 2-thiolation protein 1.